The primary structure comprises 666 residues: Fructose-1,6-bisphosphatase class 3 (666 aa).

This sequence belongs to the FBPase class 3 family. Mn(2+) is required as a cofactor.

It carries out the reaction beta-D-fructose 1,6-bisphosphate + H2O = beta-D-fructose 6-phosphate + phosphate. The protein operates within carbohydrate biosynthesis; gluconeogenesis. This Parabacteroides distasonis (strain ATCC 8503 / DSM 20701 / CIP 104284 / JCM 5825 / NCTC 11152) protein is Fructose-1,6-bisphosphatase class 3.